The primary structure comprises 427 residues: 3-phosphoshikimate 1-carboxyvinyltransferase (427 aa).

3-phosphoshikimate is bound by residues Lys20, Ser21, and Arg25. Residue Lys20 coordinates phosphoenolpyruvate. Gly92 and Arg120 together coordinate phosphoenolpyruvate. The 3-phosphoshikimate site is built by Ser165, Gln167, Asp313, and Lys340. Position 167 (Gln167) interacts with phosphoenolpyruvate. The Proton acceptor role is filled by Asp313. Phosphoenolpyruvate-binding residues include Arg344 and Arg388.

The protein belongs to the EPSP synthase family. Monomer.

The protein localises to the cytoplasm. The catalysed reaction is 3-phosphoshikimate + phosphoenolpyruvate = 5-O-(1-carboxyvinyl)-3-phosphoshikimate + phosphate. It participates in metabolic intermediate biosynthesis; chorismate biosynthesis; chorismate from D-erythrose 4-phosphate and phosphoenolpyruvate: step 6/7. Its function is as follows. Catalyzes the transfer of the enolpyruvyl moiety of phosphoenolpyruvate (PEP) to the 5-hydroxyl of shikimate-3-phosphate (S3P) to produce enolpyruvyl shikimate-3-phosphate and inorganic phosphate. The sequence is that of 3-phosphoshikimate 1-carboxyvinyltransferase from Geobacillus kaustophilus (strain HTA426).